The following is a 254-amino-acid chain: SLA class II histocompatibility antigen, DQ haplotype C alpha chain (254 aa).

Positions 1-23 (MVPGRVLMWGALALTTVMSACGG) are cleaved as a signal peptide. Residues 24-120 (EDIAADHVAS…KVPEVTVFSK (97 aa)) are alpha-1. The Extracellular portion of the chain corresponds to 24 to 216 (EDIAADHVAS…IPAPMSELTE (193 aa)). N104 and N144 each carry an N-linked (GlcNAc...) asparagine glycan. The region spanning 113-204 (PEVTVFSKSP…LDKPLLKHWE (92 aa)) is the Ig-like C1-type domain. The alpha-2 stretch occupies residues 121 to 203 (SPVILGQPNT…GLDKPLLKHW (83 aa)). Residues C133 and C188 are joined by a disulfide bond. The connecting peptide stretch occupies residues 204–216 (EPEIPAPMSELTE). The chain crosses the membrane as a helical span at residues 217 to 239 (TVVCALGLIVGLVGIVVGTVFII). Residues 240 to 254 (QGLRSGGPSRHQGSL) are Cytoplasmic-facing.

It belongs to the MHC class II family.

Its subcellular location is the membrane. The protein is SLA class II histocompatibility antigen, DQ haplotype C alpha chain of Sus scrofa (Pig).